A 138-amino-acid polypeptide reads, in one-letter code: uncharacterized protein (138 aa).

Phosphoserine is present on serine 110.

Its subcellular location is the cytoplasm. The protein localises to the nucleus. This is an uncharacterized protein from Schizosaccharomyces pombe (strain 972 / ATCC 24843) (Fission yeast).